Here is a 90-residue protein sequence, read N- to C-terminus: UPF0297 protein ABC1593 (90 aa).

The protein belongs to the UPF0297 family.

The protein is UPF0297 protein ABC1593 of Shouchella clausii (strain KSM-K16) (Alkalihalobacillus clausii).